The following is a 430-amino-acid chain: Histidine--tRNA ligase (430 aa).

Belongs to the class-II aminoacyl-tRNA synthetase family. In terms of assembly, homodimer.

The protein localises to the cytoplasm. The catalysed reaction is tRNA(His) + L-histidine + ATP = L-histidyl-tRNA(His) + AMP + diphosphate + H(+). This Chlorobium limicola (strain DSM 245 / NBRC 103803 / 6330) protein is Histidine--tRNA ligase.